The primary structure comprises 90 residues: UPF0367 protein Npun_R4552 (90 aa).

Belongs to the UPF0367 family.

This is UPF0367 protein Npun_R4552 from Nostoc punctiforme (strain ATCC 29133 / PCC 73102).